The primary structure comprises 552 residues: Membrane protein insertase YidC (552 aa).

The helical transmembrane segment at 6 to 26 (NLLLAAIAAVILMLFIRWNHF) threads the bilayer. Composition is skewed to polar residues over residues 32–41 (QHQAGNTPAG) and 60–70 (PTASDTPQATA). The segment at 32 to 70 (QHQAGNTPAGSSIAAIAPDSNGDIPSAVPTASDTPQATA) is disordered. The next 4 helical transmembrane spans lie at 365–387 (WGLA…SAAS), 431–451 (FGGC…YWVL), 472–492 (MDPY…MQKL), and 508–528 (LPFV…LYWV).

This sequence belongs to the OXA1/ALB3/YidC family. Type 1 subfamily. As to quaternary structure, interacts with the Sec translocase complex via SecD. Specifically interacts with transmembrane segments of nascent integral membrane proteins during membrane integration.

It localises to the cell inner membrane. Its function is as follows. Required for the insertion and/or proper folding and/or complex formation of integral membrane proteins into the membrane. Involved in integration of membrane proteins that insert both dependently and independently of the Sec translocase complex, as well as at least some lipoproteins. Aids folding of multispanning membrane proteins. This is Membrane protein insertase YidC from Cellvibrio japonicus (strain Ueda107) (Pseudomonas fluorescens subsp. cellulosa).